Consider the following 447-residue polypeptide: Cysteine--tRNA ligase (447 aa).

Cysteine 28 contributes to the Zn(2+) binding site. The 'HIGH' region signature appears at 30–40; it reads PTVYNYIHIGN. The Zn(2+) site is built by cysteine 211, histidine 236, and glutamate 240. Residues 268–272 carry the 'KMSKS' region motif; that stretch reads KMSKS. Lysine 271 contributes to the ATP binding site.

Belongs to the class-I aminoacyl-tRNA synthetase family. As to quaternary structure, monomer. Zn(2+) serves as cofactor.

It localises to the cytoplasm. It catalyses the reaction tRNA(Cys) + L-cysteine + ATP = L-cysteinyl-tRNA(Cys) + AMP + diphosphate. The sequence is that of Cysteine--tRNA ligase from Streptococcus pyogenes serotype M28 (strain MGAS6180).